The primary structure comprises 295 residues: Alpha-ketoglutarate-dependent sulfate ester dioxygenase (295 aa).

His71 contributes to the substrate binding site. Fe cation is bound by residues His98 and Asp100. Val101 provides a ligand contact to substrate. Position 125 (Thr125) interacts with 2-oxoglutarate. His252 serves as a coordination point for Fe cation. Positions 263 and 267 each coordinate 2-oxoglutarate.

Belongs to the TfdA dioxygenase family. The cofactor is Fe(2+).

The catalysed reaction is a primary linear alkyl sulfate ester + 2-oxoglutarate + O2 = an aldehyde + sulfate + succinate + CO2 + H(+). The enzyme catalyses 2-ethylhexyl sulfate + 2-oxoglutarate + O2 = 2-ethylhexanal + sulfate + succinate + CO2 + H(+). It catalyses the reaction hexyl sulfate + 2-oxoglutarate + O2 = hexanal + sulfate + succinate + CO2 + H(+). It carries out the reaction pentyl sulfate + 2-oxoglutarate + O2 = pentanal + sulfate + succinate + CO2 + H(+). The catalysed reaction is heptyl sulfate + 2-oxoglutarate + O2 = heptanal + sulfate + succinate + CO2 + H(+). Its function is as follows. Alpha-ketoglutarate-dependent sulfate ester dioxygenase, which oxidizes medium-chain alkyl-sulfate esters. Shows preference for 2-ethylhexyl sulfate (2-EHS) in vitro, leading to the formation of succinate and 2-ethylhexanal. Has likely a role in sulfate scavenging in vivo. Functionally, also causes the inactivation of the 2-carboxyquinoxaline Ty38c (an antitubercular compound that inhibits DprE1) via oxidative decarboxylation, using Ty38c instead of alpha-ketoglutarate as a substrate. Is thus responsible for primary resistance of M.tuberculosis to Ty38c in vitro. Overexpression of Rv3406 causes resistance to Ty38c. This is Alpha-ketoglutarate-dependent sulfate ester dioxygenase from Mycobacterium tuberculosis (strain ATCC 25618 / H37Rv).